An 875-amino-acid polypeptide reads, in one-letter code: Alanine--tRNA ligase (875 aa).

Zn(2+)-binding residues include His-564, His-568, Cys-666, and His-670.

Belongs to the class-II aminoacyl-tRNA synthetase family. Homotetramer. Requires Zn(2+) as cofactor.

The protein resides in the cytoplasm. The catalysed reaction is tRNA(Ala) + L-alanine + ATP = L-alanyl-tRNA(Ala) + AMP + diphosphate. Catalyzes the attachment of alanine to tRNA(Ala) in a two-step reaction: alanine is first activated by ATP to form Ala-AMP and then transferred to the acceptor end of tRNA(Ala). Also edits incorrectly charged Ser-tRNA(Ala) and Gly-tRNA(Ala) via its editing domain. The polypeptide is Alanine--tRNA ligase (Citrobacter koseri (strain ATCC BAA-895 / CDC 4225-83 / SGSC4696)).